The primary structure comprises 295 residues: Putative clathrin assembly protein At5g65370 (295 aa).

The 144-residue stretch at 26 to 169 (CSSVNAKTID…SIAEVLGITP (144 aa)) folds into the ENTH domain.

It is found in the membrane. Its subcellular location is the clathrin-coated pit. The protein localises to the golgi apparatus. The protein resides in the cytoplasmic vesicle. It localises to the clathrin-coated vesicle. This Arabidopsis thaliana (Mouse-ear cress) protein is Putative clathrin assembly protein At5g65370.